The following is a 277-amino-acid chain: N-acetylmuramic acid 6-phosphate etherase (277 aa).

Residues 53–216 (IIPRVKKGGR…STTIMIELGR (164 aa)) enclose the SIS domain. The active-site Proton donor is Glu-81. Glu-112 is a catalytic residue.

This sequence belongs to the GCKR-like family. MurNAc-6-P etherase subfamily. Homodimer.

The enzyme catalyses N-acetyl-D-muramate 6-phosphate + H2O = N-acetyl-D-glucosamine 6-phosphate + (R)-lactate. Its pathway is amino-sugar metabolism; N-acetylmuramate degradation. In terms of biological role, specifically catalyzes the cleavage of the D-lactyl ether substituent of MurNAc 6-phosphate, producing GlcNAc 6-phosphate and D-lactate. In Bacteroides thetaiotaomicron (strain ATCC 29148 / DSM 2079 / JCM 5827 / CCUG 10774 / NCTC 10582 / VPI-5482 / E50), this protein is N-acetylmuramic acid 6-phosphate etherase.